The chain runs to 944 residues: ATP-dependent RNA helicase DDX42 (944 aa).

Gly residues predominate over residues 1-18 (MNWNKGGPGTKRGFGFGG). Disordered stretches follow at residues 1 to 119 (MNWN…LEAF), 131 to 155 (MKRL…EEED), and 182 to 203 (EYDS…LPPI). The span at 35-52 (SHSAFGTAGSSAAFAKSG) shows a compositional bias: low complexity. Positions 70-84 (DEENAYFEDEEEDNS) are enriched in acidic residues. Residues 120–157 (MAEVEDQAARDMKRLEDKDKEKKNAKGIRDDIEEEDDQ) are a coiled coil. Residues 131–149 (MKRLEDKDKEKKNAKGIRD) are compositionally biased toward basic and acidic residues. Residues 253-281 (SSFARFGFDEQLMHQIRKSEYTQPTPIQC) carry the Q motif motif. Residues 284–459 (VPVAMSGRDM…RDILIDPIRV (176 aa)) enclose the Helicase ATP-binding domain. Position 297-304 (297-304 (AKTGSGKT)) interacts with ATP. The short motif at 407–410 (DEAD) is the DEAD box element. The 146-residue stretch at 487–632 (WLTRRLVEFT…HVSKELLDLA (146 aa)) folds into the Helicase C-terminal domain. Disordered regions lie at residues 642 to 682 (RFKG…VMSN), 723 to 753 (GSSA…AANP), and 794 to 944 (SANA…RWDS). Residues 723–737 (GSSAAGASGWTSAGS) show a composition bias toward low complexity. Positions 738–752 (LNSVPTSSAQQNAAN) are enriched in polar residues. Over residues 794–814 (SANASAGNREGVGSAGSAPRG) the composition is skewed to low complexity. Positions 815-824 (GSSGGGGGGI) are enriched in gly residues. Basic and acidic residues-rich tracts occupy residues 825–887 (VRER…RHFT) and 901–926 (NISE…DNKT).

This sequence belongs to the DEAD box helicase family. DDX42 subfamily. Transient component of the SF3B subcomplex of the 17S U2 SnRNP complex.

It is found in the cytoplasm. It localises to the nucleus. It catalyses the reaction ATP + H2O = ADP + phosphate + H(+). Its function is as follows. ATP-dependent RNA helicase that binds to partially double-stranded RNAs (dsRNAs) in order to unwind RNA secondary structures. Unwinding is promoted in the presence of single-strand binding proteins. Also mediates RNA duplex formation thereby displacing the single-strand RNA binding protein. ATP and ADP modulate its activity: ATP binding and hydrolysis by DDX42 triggers RNA strand separation, whereas the ADP-bound form of the protein triggers annealing of complementary RNA strands. Required for assembly of the 17S U2 SnRNP complex of the spliceosome, a large ribonucleoprotein complex that removes introns from transcribed pre-mRNAs: DDX42 associates transiently with the SF3B subcomplex of the 17S U2 SnRNP complex and is released after fulfilling its role in the assembly of 17S U2 SnRNP. This is ATP-dependent RNA helicase DDX42 (DDX42) from Gallus gallus (Chicken).